Consider the following 499-residue polypeptide: MFKLKQLHELIVPWISGINVKIPYLTGLELDSRNINFGNLFIAIQGYNTDGRLHIDDAINNGAVAILSESYNKSTFFIKKIVNNVEVIPIIYFNQLNKCISNIAGRFYDHPSLCLKLIGVTGTNGKTTITHLLTNWTSLLGERSAVMGTLGNGVLSDINPSCCTTCSAIETQKILKQFVQSGVTFVAMEISSHGLDQYRVDSLYFDVAIFSNISNDHLDYHNNINQYRMAKWRLFNELRVKNYVINVDDCVGYRWLLSLSNAVAVTIKNNLPRSWSGRWIALVKADYYLYGTKIVFKSSWGNGFIHSQLLGEVNVSNILLALGALLIMGYSLKSLLYTGSKLYPVCGRLEVLSCLNHPTVIVDYAHTPDALKKILIFAKHLCNKGRLWCIFGCGGNRDRSKRSLMGVIANRYSDYVIITNDNPRVEDPKLIIDDIICKIRNSEKLKIIEDRVYAINMVVSKACSDDFVLILGKGHEKYQNIGLNYISHSDQDIVKSIFK.

UDP-N-acetyl-alpha-D-muramoyl-L-alanyl-D-glutamate-binding residues include Leu30 and Ser32. Residue 122 to 128 (GTNGKTT) coordinates ATP. UDP-N-acetyl-alpha-D-muramoyl-L-alanyl-D-glutamate-binding positions include 164–165 (TT), Ser191, Gln197, and Arg199. Lys231 is subject to N6-carboxylysine. Residues Arg397, 421 to 424 (DNPR), Gly472, and Glu476 contribute to the meso-2,6-diaminopimelate site. Residues 421–424 (DNPR) carry the Meso-diaminopimelate recognition motif motif.

Belongs to the MurCDEF family. MurE subfamily. Mg(2+) serves as cofactor. Post-translationally, carboxylation is probably crucial for Mg(2+) binding and, consequently, for the gamma-phosphate positioning of ATP.

Its subcellular location is the cytoplasm. It carries out the reaction UDP-N-acetyl-alpha-D-muramoyl-L-alanyl-D-glutamate + meso-2,6-diaminopimelate + ATP = UDP-N-acetyl-alpha-D-muramoyl-L-alanyl-gamma-D-glutamyl-meso-2,6-diaminopimelate + ADP + phosphate + H(+). It participates in cell wall biogenesis; peptidoglycan biosynthesis. Catalyzes the addition of meso-diaminopimelic acid to the nucleotide precursor UDP-N-acetylmuramoyl-L-alanyl-D-glutamate (UMAG) in the biosynthesis of bacterial cell-wall peptidoglycan. This Blochmanniella floridana protein is UDP-N-acetylmuramoyl-L-alanyl-D-glutamate--2,6-diaminopimelate ligase.